The chain runs to 702 residues: Elongation factor G (702 aa).

Residues 8 to 290 (CQYRNIGISA…AIIEYLPAPN (283 aa)) enclose the tr-type G domain. GTP is bound by residues 17-24 (AHIDAGKT), 88-92 (DTPGH), and 142-145 (NKMD).

The protein belongs to the TRAFAC class translation factor GTPase superfamily. Classic translation factor GTPase family. EF-G/EF-2 subfamily.

It is found in the cytoplasm. Functionally, catalyzes the GTP-dependent ribosomal translocation step during translation elongation. During this step, the ribosome changes from the pre-translocational (PRE) to the post-translocational (POST) state as the newly formed A-site-bound peptidyl-tRNA and P-site-bound deacylated tRNA move to the P and E sites, respectively. Catalyzes the coordinated movement of the two tRNA molecules, the mRNA and conformational changes in the ribosome. This Buchnera aphidicola subsp. Schizaphis graminum (strain Sg) protein is Elongation factor G.